The sequence spans 292 residues: ATP-dependent Clp protease proteolytic subunit 4, chloroplastic (292 aa).

Residues 1-65 constitute a chloroplast transit peptide; that stretch reads MGTLSLSSSL…LRFANASIEM (65 aa). Ser-66 carries the N-acetylserine modification. The active-site Nucleophile is the Ser-158. Residue His-183 is part of the active site.

It belongs to the peptidase S14 family. As to quaternary structure, component of the chloroplastic Clp protease core complex which consist of at least 16 proteins: CLPP4 (3 copies), CLPP5 (3 copies), CLPR4 (2 copies), ClpP1 (1 copy), CLPP6 (1 copy), CLPR2 (1 copy), CLPT1 (1 copy), CLPT2 (1 copy) and 3 copies of CLPP3 and/or CLPR1 and/or CLPR3. Interacts with CHIP. The core complex is organized in two heptameric rings, one containing CLPP3,4,5,6 in a 1:2:3:1 ratio and the other CLPP1 and CLPR1,2,3,4 in a 3:1:1:1:1 ratio. Ubiquitinated by CHIP. In terms of tissue distribution, mostly expressed in leaves. Also detected in stems, and to a lower extent, in roots (at protein level).

Its subcellular location is the plastid. It localises to the chloroplast stroma. The enzyme catalyses Hydrolysis of proteins to small peptides in the presence of ATP and magnesium. alpha-casein is the usual test substrate. In the absence of ATP, only oligopeptides shorter than five residues are hydrolyzed (such as succinyl-Leu-Tyr-|-NHMec, and Leu-Tyr-Leu-|-Tyr-Trp, in which cleavage of the -Tyr-|-Leu- and -Tyr-|-Trp bonds also occurs).. Cleaves peptides in various proteins in a process that requires ATP hydrolysis. Has a chymotrypsin-like activity. Plays a major role in the degradation of misfolded proteins. Essential protein required for chloroplast development and integrity. Essential for Embryogenesis. The sequence is that of ATP-dependent Clp protease proteolytic subunit 4, chloroplastic from Arabidopsis thaliana (Mouse-ear cress).